The chain runs to 508 residues: Phenylalanine--tRNA ligase alpha subunit (508 aa).

An N-acetylalanine modification is found at Ala-2. Ser-193 and Ser-301 each carry phosphoserine. Lys-311 bears the N6-acetyllysine mark. Residues Thr-329, 372–374 (QIE), and Tyr-412 each bind L-phenylalanine. Glu-414 is a Mg(2+) binding site. Residue Phe-438 participates in L-phenylalanine binding.

This sequence belongs to the class-II aminoacyl-tRNA synthetase family. Phe-tRNA synthetase alpha subunit type 2 subfamily. Heterotetramer; dimer of two heterodimers formed by FARSA and FARSB. Mg(2+) is required as a cofactor.

The protein localises to the cytoplasm. It carries out the reaction tRNA(Phe) + L-phenylalanine + ATP = L-phenylalanyl-tRNA(Phe) + AMP + diphosphate + H(+). This chain is Phenylalanine--tRNA ligase alpha subunit (Farsa), found in Mus musculus (Mouse).